The chain runs to 194 residues: Granulocyte colony-stimulating factor (194 aa).

The signal sequence occupies residues 1 to 20 (KLMALQLLLWHSALWMVQEA). Cystine bridges form between cysteine 56–cysteine 62 and cysteine 84–cysteine 94. The O-linked (GalNAc...) threonine glycan is linked to threonine 153.

This sequence belongs to the IL-6 superfamily. In terms of assembly, monomer. O-glycosylated.

The protein resides in the secreted. Its function is as follows. Granulocyte/macrophage colony-stimulating factors are cytokines that act in hematopoiesis by controlling the production, differentiation, and function of 2 related white cell populations of the blood, the granulocytes and the monocytes-macrophages. This CSF induces granulocytes. In Felis catus (Cat), this protein is Granulocyte colony-stimulating factor (CSF3).